Here is a 216-residue protein sequence, read N- to C-terminus: Somatotropin (216 aa).

The first 26 residues, 1–26, serve as a signal peptide directing secretion; it reads MAAGPRTSVLLAFTLLCLPWPQEAGA. Residue histidine 45 coordinates Zn(2+). Cysteine 78 and cysteine 189 are oxidised to a cystine. Serine 131 carries the post-translational modification Phosphoserine. Glutamate 198 provides a ligand contact to Zn(2+). Residues cysteine 206 and cysteine 214 are joined by a disulfide bond.

It belongs to the somatotropin/prolactin family.

It is found in the secreted. Plays an important role in growth control. Its major role in stimulating body growth is to stimulate the liver and other tissues to secrete IGF1. It stimulates both the differentiation and proliferation of myoblasts. It also stimulates amino acid uptake and protein synthesis in muscle and other tissues. In Camelus dromedarius (Dromedary), this protein is Somatotropin (GH1).